A 267-amino-acid chain; its full sequence is Undecaprenyl-diphosphatase (267 aa).

7 consecutive transmembrane segments (helical) span residues 7–29 (LILGIIEGLTEFLPVSSTGHMIL), 41–61 (FWKSFLIIIQLGSILAVIFVF), 69–89 (LDIWLKLAAGFFPTGVIGLFV), 96–116 (LFNGWVVVGMLIFGGVVFILI), 173–193 (AAEFSFLLAIPTMIIATAYSI), 207–227 (IPLGIGFITAFVVAVLVIKFF), and 239–259 (FGIYRIILGFVFFYLYYSGIL).

It belongs to the UppP family.

The protein resides in the cell inner membrane. It carries out the reaction di-trans,octa-cis-undecaprenyl diphosphate + H2O = di-trans,octa-cis-undecaprenyl phosphate + phosphate + H(+). In terms of biological role, catalyzes the dephosphorylation of undecaprenyl diphosphate (UPP). Confers resistance to bacitracin. The protein is Undecaprenyl-diphosphatase of Campylobacter jejuni subsp. jejuni serotype O:6 (strain 81116 / NCTC 11828).